The following is a 296-amino-acid chain: Polyamine aminopropyltransferase (296 aa).

Positions 5-238 (ELWYETLHAN…GIMTFAWATQ (234 aa)) constitute a PABS domain. Position 33 (glutamine 33) interacts with S-methyl-5'-thioadenosine. Residues histidine 64 and aspartate 88 each coordinate spermidine. S-methyl-5'-thioadenosine-binding positions include glutamate 108 and 140–141 (DG). Aspartate 158 functions as the Proton acceptor in the catalytic mechanism. Residue 158–161 (DCTD) coordinates spermidine. Proline 165 serves as a coordination point for S-methyl-5'-thioadenosine.

The protein belongs to the spermidine/spermine synthase family. Homodimer or homotetramer.

It localises to the cytoplasm. The enzyme catalyses S-adenosyl 3-(methylsulfanyl)propylamine + putrescine = S-methyl-5'-thioadenosine + spermidine + H(+). It participates in amine and polyamine biosynthesis; spermidine biosynthesis; spermidine from putrescine: step 1/1. Its function is as follows. Catalyzes the irreversible transfer of a propylamine group from the amino donor S-adenosylmethioninamine (decarboxy-AdoMet) to putrescine (1,4-diaminobutane) to yield spermidine. The protein is Polyamine aminopropyltransferase of Yersinia pseudotuberculosis serotype O:1b (strain IP 31758).